A 161-amino-acid polypeptide reads, in one-letter code: uncharacterized protein (161 aa).

The chain crosses the membrane as a helical span at residues glycine 30–phenylalanine 50.

Its subcellular location is the membrane. This is an uncharacterized protein from Homo sapiens (Human).